The primary structure comprises 1032 residues: Beta-galactosidase (1032 aa).

Residues Asn-100 and Asp-198 each contribute to the substrate site. Residue Asp-198 participates in Na(+) binding. 3 residues coordinate Mg(2+): Glu-413, His-415, and Glu-458. Residues Glu-458 and 534 to 537 contribute to the substrate site; that span reads EYAH. The active-site Proton donor is the Glu-458. Glu-534 functions as the Nucleophile in the catalytic mechanism. Asn-594 lines the Mg(2+) pocket. Na(+)-binding residues include Phe-598 and Asn-601. The substrate site is built by Asn-601 and Trp-1006.

Belongs to the glycosyl hydrolase 2 family. In terms of assembly, homotetramer. Requires Mg(2+) as cofactor. The cofactor is Na(+).

The catalysed reaction is Hydrolysis of terminal non-reducing beta-D-galactose residues in beta-D-galactosides.. The polypeptide is Beta-galactosidase (Vibrio vulnificus (strain CMCP6)).